Reading from the N-terminus, the 352-residue chain is MATQMVKGNTAVIIGAMYAGCDCYFGYPITPASEILHEASRYFPLVGRKFVQAESEEAAINMVYGAAAAGHRVMTASSGPGMSLKQEGISFLAGAELPAVIVDVMRAGPGLGNIGPEQADYNQLVKGGGHGNYRNIVLAPNSVQEMCDLTMDAFELADKYRNPVIILADAVLGQMAEPLRFPERAVEHRPDTSWAVCGSRETMKNLVTSIFLDFDELEEFNFYLQEKYAAVEENEVRYEEYMVEDAEIVLVAYGISSRVAKSAVDTARADGIKVGLLRPITLFPFPSERIRELAEGGCTFISVEMSSGQMREDIKMASGCRDVELVNRMGGNLIELRDILRKIREIAGESND.

As to quaternary structure, heterotrimer of the VorA, VorB and VorC subunits.

The catalysed reaction is 3-methyl-2-oxobutanoate + 2 oxidized [2Fe-2S]-[ferredoxin] + CoA = 2-methylpropanoyl-CoA + 2 reduced [2Fe-2S]-[ferredoxin] + CO2 + H(+). In Methanothermobacter marburgensis (strain ATCC BAA-927 / DSM 2133 / JCM 14651 / NBRC 100331 / OCM 82 / Marburg) (Methanobacterium thermoautotrophicum), this protein is Ketoisovalerate oxidoreductase subunit VorB (vorB).